The following is a 557-amino-acid chain: Tripeptidyl-peptidase 1 (557 aa).

An N-terminal signal peptide occupies residues 1-16 (MRVAVFVLSFIWLVNG). Residues 17–190 (ELLEADQDAV…WEGARQAILG (174 aa)) constitute a propeptide, removed in mature form. N-linked (GlcNAc...) asparagine glycosylation occurs at Asn53. An intrachain disulfide couples Cys107 to Cys118. Positions 194 to 557 (GVTPAVIRNR…YPVFLASLMD (364 aa)) constitute a Peptidase S53 domain. 2 N-linked (GlcNAc...) asparagine glycosylation sites follow: Asn205 and Asn216. Catalysis depends on charge relay system residues Glu266 and Asp270. N-linked (GlcNAc...) asparagine glycosylation is found at Asn280, Asn307, and Asn438. 2 disulfide bridges follow: Cys359-Cys521 and Cys517-Cys532. Catalysis depends on Ser470, which acts as the Charge relay system. Positions 512 and 513 each coordinate Ca(2+). A Ca(2+)-binding site is contributed by Asp538.

Ca(2+) serves as cofactor. In terms of processing, activated by autocatalytic proteolytical processing.

The protein localises to the lysosome. The enzyme catalyses Release of an N-terminal tripeptide from a polypeptide, but also has endopeptidase activity.. Its function is as follows. Lysosomal serine protease with tripeptidyl-peptidase I activity. May act as a non-specific lysosomal peptidase which generates tripeptides from the breakdown products produced by lysosomal proteinases. Requires substrates with an unsubstituted N-terminus. This is Tripeptidyl-peptidase 1 from Danio rerio (Zebrafish).